The primary structure comprises 213 residues: Thiamine-phosphate synthase (213 aa).

Residues 42–46 (QYREK) and D77 each bind 4-amino-2-methyl-5-(diphosphooxymethyl)pyrimidine. D78 and D97 together coordinate Mg(2+). S116 contributes to the 4-amino-2-methyl-5-(diphosphooxymethyl)pyrimidine binding site. 142-144 (TIS) is a binding site for 2-[(2R,5Z)-2-carboxy-4-methylthiazol-5(2H)-ylidene]ethyl phosphate. Position 145 (K145) interacts with 4-amino-2-methyl-5-(diphosphooxymethyl)pyrimidine. Residues G173 and 193 to 194 (IS) contribute to the 2-[(2R,5Z)-2-carboxy-4-methylthiazol-5(2H)-ylidene]ethyl phosphate site.

It belongs to the thiamine-phosphate synthase family. It depends on Mg(2+) as a cofactor.

It catalyses the reaction 2-[(2R,5Z)-2-carboxy-4-methylthiazol-5(2H)-ylidene]ethyl phosphate + 4-amino-2-methyl-5-(diphosphooxymethyl)pyrimidine + 2 H(+) = thiamine phosphate + CO2 + diphosphate. The enzyme catalyses 2-(2-carboxy-4-methylthiazol-5-yl)ethyl phosphate + 4-amino-2-methyl-5-(diphosphooxymethyl)pyrimidine + 2 H(+) = thiamine phosphate + CO2 + diphosphate. It carries out the reaction 4-methyl-5-(2-phosphooxyethyl)-thiazole + 4-amino-2-methyl-5-(diphosphooxymethyl)pyrimidine + H(+) = thiamine phosphate + diphosphate. It participates in cofactor biosynthesis; thiamine diphosphate biosynthesis; thiamine phosphate from 4-amino-2-methyl-5-diphosphomethylpyrimidine and 4-methyl-5-(2-phosphoethyl)-thiazole: step 1/1. Condenses 4-methyl-5-(beta-hydroxyethyl)thiazole monophosphate (THZ-P) and 2-methyl-4-amino-5-hydroxymethyl pyrimidine pyrophosphate (HMP-PP) to form thiamine monophosphate (TMP). The polypeptide is Thiamine-phosphate synthase (Limosilactobacillus fermentum (strain NBRC 3956 / LMG 18251) (Lactobacillus fermentum)).